We begin with the raw amino-acid sequence, 165 residues long: ATP synthase subunit b (165 aa).

Residues 7 to 27 (STTIGDIIIVSGSVLLLFILI) form a helical membrane-spanning segment.

Belongs to the ATPase B chain family. As to quaternary structure, F-type ATPases have 2 components, F(1) - the catalytic core - and F(0) - the membrane proton channel. F(1) has five subunits: alpha(3), beta(3), gamma(1), delta(1), epsilon(1). F(0) has three main subunits: a(1), b(2) and c(10-14). The alpha and beta chains form an alternating ring which encloses part of the gamma chain. F(1) is attached to F(0) by a central stalk formed by the gamma and epsilon chains, while a peripheral stalk is formed by the delta and b chains.

It is found in the cell membrane. Functionally, f(1)F(0) ATP synthase produces ATP from ADP in the presence of a proton or sodium gradient. F-type ATPases consist of two structural domains, F(1) containing the extramembraneous catalytic core and F(0) containing the membrane proton channel, linked together by a central stalk and a peripheral stalk. During catalysis, ATP synthesis in the catalytic domain of F(1) is coupled via a rotary mechanism of the central stalk subunits to proton translocation. Its function is as follows. Component of the F(0) channel, it forms part of the peripheral stalk, linking F(1) to F(0). The chain is ATP synthase subunit b from Streptococcus agalactiae serotype Ia (strain ATCC 27591 / A909 / CDC SS700).